Reading from the N-terminus, the 644-residue chain is Putative aldehyde dehydrogenase-like protein YHR039C (644 aa).

Asn15 carries N-linked (GlcNAc...) asparagine glycosylation. Glu354 functions as the Proton acceptor in the catalytic mechanism. Residue Cys389 is the Nucleophile of the active site. N-linked (GlcNAc...) asparagine glycosylation is found at Asn565 and Asn627.

It belongs to the aldehyde dehydrogenase family. In terms of processing, N-glycosylated.

It localises to the endoplasmic reticulum. This is Putative aldehyde dehydrogenase-like protein YHR039C (MSC7) from Saccharomyces cerevisiae (strain ATCC 204508 / S288c) (Baker's yeast).